The following is a 923-amino-acid chain: MSYPYQKSHHQTQQPQQNGHPQHQLMLQQQQQADHSPHHHHHHHVHHATAHAYPYELGRSPLRSPQSPPLYSGKPPPPPPQSYHSYQQPPTAAHPPVSLSGAPTSMPGMMPGQQPPGMTLSLGGGGGGGGGGSAGDCFMLPPLQPQSPDGLSTVTNTSSTATNAPSARSVYPQHHQPSYPSIGSSHHPFHSPASAAALIGPSMPQHAQQQQQHQMQPHHYSSMHLLGPAGGPPSSVGPASMVGMMGPGGHGGGGVGGGAGGIAGGVGGGPGGGMGGGHNYSQSDDDSGCALEEYTWVPPGLRPDQVHLYFSAIPEDKVPYVNSIGERHRVRQLLQQLPPHDNEVRYCHSLTDEERKELKLFSAQRKREALGRGTVKQITTTLICERCGECASSGDMMVFASRFEPNTCWHPACFACCVCKELLVDLIYFHRENRLYCGRHHAETLKPRCSACDEIILADECTEAEGRAWHIKHFACFECDKQLGGQRYIMRDGKPYCLHCFDAMFAEYCDYCSEPIGVDQGQMSHDGQHWHATDQCFACSTCRCSLLGRPFLPRRGEIYCSIACSKGEPPTPSDEYAHRSSQPSHTAARSPEPLRSPERGTGRLSPPHTEHEVQSHEAASTVGSDRDHQLRSPASNGTATDNGTGTAGGGVGDSNRHRIPHRQPLDLTDLGHSLEQHWQSERTGSETISITTATATVRTQVTGPIAGANGNGPTGGGPILTSSMPELNRCLAAAGSGESPSFSGTNSPTPMPIEDSVVANGGDDADEQNQNASDASHSIKEVRFEGDFQDSLPRTKSYCQRNGGQRNRAAKSSSYASDDDELAEDETDNYHHRRHHHSHQREQQRPVDDSDARSVCSTCSSSSSSADDDVYELPLRRTSYGGTRIHYMPNNSLACARKRKQLQTSSGVAGQHYEKDNKNCIIS.

A disordered region spans residues Met-1–Ala-196. A compositionally biased stretch (low complexity) spans Gln-11 to Asp-34. Positions Pro-37–Thr-49 are enriched in basic residues. Composition is skewed to low complexity over residues Arg-59 to Gly-73 and Met-106 to Met-118. The span at Leu-122–Ala-134 shows a compositional bias: gly residues. Low complexity-rich tracts occupy residues Ser-152 to Ser-169 and Ser-184 to Ala-196. Residues Gly-275–Ile-383 form the PET domain. LIM zinc-binding domains are found at residues Leu-382 to Lys-446, Pro-447 to Glu-507, and Tyr-508 to Pro-570. Disordered stretches follow at residues Thr-571–Thr-668 and Gly-703–Asp-867. Over residues Asn-709 to Pro-718 the composition is skewed to gly residues. Residues Glu-738–Pro-748 are compositionally biased toward polar residues. The span at His-777–Gly-786 shows a compositional bias: basic and acidic residues. Residues Leu-792–Gln-805 show a composition bias toward polar residues. Positions Ser-817–Thr-827 are enriched in acidic residues. The span at Gln-840–Ala-852 shows a compositional bias: basic and acidic residues. Residues Arg-853 to Ser-865 show a composition bias toward low complexity.

Belongs to the prickle / espinas / testin family. Interacts with dsh; PET and LIM domains interact with dsh DEP domain, in wing cells. Interacts with Vang in photoreceptor cells.

It is found in the cell membrane. Acts in a planar cell polarity (PCP) complex; polarization along the apical/basal axis of epithelial cells. PCP signaling in the wing disk requires the receptor fz and the cytoplasmic proteins dsh and pk. These act in a feedback loop leading to activation of the jnk cascade and subsequent polarized arrangement of hairs and bristles. Dgo and pk compete with one another for dsh binding, thereby modulating fz dsh activity and ensuring tight control over fz PCP signaling. Vang, stan and pk function together to regulate the establishment of tissue polarity in the adult eye. The protein is Protein prickle of Anopheles gambiae (African malaria mosquito).